Here is a 113-residue protein sequence, read N- to C-terminus: Hydrogenase maturation factor HypA (113 aa).

Residue His2 participates in Ni(2+) binding. Zn(2+) is bound by residues Cys73, Cys76, Cys89, and Cys92.

It belongs to the HypA/HybF family.

Involved in the maturation of [NiFe] hydrogenases. Required for nickel insertion into the metal center of the hydrogenase. The sequence is that of Hydrogenase maturation factor HypA from Actinobacillus succinogenes (strain ATCC 55618 / DSM 22257 / CCUG 43843 / 130Z).